The sequence spans 166 residues: Large ribosomal subunit protein bL17 (166 aa).

The interval 122–166 is disordered; it reads PESAPVKAKQDRSKRVRGSKKTQEGSEKAEVSASAGEAAAVTEEK. A compositionally biased stretch (basic and acidic residues) spans 142-151; sequence KTQEGSEKAE. The span at 152–166 shows a compositional bias: low complexity; that stretch reads VSASAGEAAAVTEEK.

It belongs to the bacterial ribosomal protein bL17 family. In terms of assembly, part of the 50S ribosomal subunit. Contacts protein L32.

The sequence is that of Large ribosomal subunit protein bL17 from Chlorobium phaeobacteroides (strain BS1).